Consider the following 301-residue polypeptide: uncharacterized protein (301 aa).

2 disordered regions span residues 56-126 (ESPT…ESDL) and 149-173 (LSTEDPKKVIVQSNTSSSSMSDASS). Basic and acidic residues predominate over residues 71–82 (VQKENQKPKDLN). Residues 93–102 (KNSSGLVSQI) show a composition bias toward polar residues. The span at 161–173 (SNTSSSSMSDASS) shows a compositional bias: low complexity.

This is an uncharacterized protein from Caenorhabditis elegans.